The following is a 346-amino-acid chain: 2,5-dichlorohydroquinone reductive dechlorinase (346 aa).

One can recognise a GST N-terminal domain in the interval 43-154 (PRFELFHFVF…YLCDALSGGT (112 aa)). One can recognise a GST C-terminal domain in the interval 189-335 (DRRPESMQAV…AIIQWPGHPP (147 aa)).

It belongs to the GST superfamily.

The catalysed reaction is 2,5-dichlorohydroquinone + 2 glutathione = chlorohydroquinone + glutathione disulfide + chloride + H(+). It carries out the reaction chlorohydroquinone + 2 glutathione = hydroquinone + glutathione disulfide + chloride + H(+). It functions in the pathway xenobiotic degradation; gamma-hexachlorocyclohexane degradation. Functionally, catalyzes the degradation of 2,5-dichlorohydroquinone (2,5-DCHQ) into hydroquinone (HQ) via chlorohydroquinone (CHQ). Is involved in the degradation pathway that allows S.japonicum UT26 to grow on gamma-hexachlorocyclohexane (gamma-HCH or lindane) as the sole source of carbon and energy. However, the conversion of CHQ to HQ by LinD seems not to be essential for this degradation pathway, because the conversion rate of CHQ to HQ is much lower than that of 2,5-DCHQ to CHQ. CHQ is more efficiently degraded by LinE in strain UT26. This is 2,5-dichlorohydroquinone reductive dechlorinase from Sphingobium indicum (strain DSM 16413 / CCM 7287 / MTCC 6362 / UT26 / NBRC 101211 / UT26S) (Sphingobium japonicum).